We begin with the raw amino-acid sequence, 204 residues long: Protein C (204 aa).

The segment at 1–78 is disordered; sequence MPSFLRGILK…TEQSQRRPKI (78 aa). Positions 10–20 are enriched in basic and acidic residues; it reads KPKERHHENKN. Low complexity predominate over residues 25–34; that stretch reads SSDSLTSSYP.

The protein belongs to the respirovirus protein C family.

The chain is Protein C (P/V/C) from Homo sapiens (Human).